Here is a 516-residue protein sequence, read N- to C-terminus: Bifunctional purine biosynthesis protein PurH (516 aa).

One can recognise an MGS-like domain in the interval 1-146; the sequence is MAPFALLSVS…KNHADVAVLT (146 aa).

It belongs to the PurH family.

The enzyme catalyses (6R)-10-formyltetrahydrofolate + 5-amino-1-(5-phospho-beta-D-ribosyl)imidazole-4-carboxamide = 5-formamido-1-(5-phospho-D-ribosyl)imidazole-4-carboxamide + (6S)-5,6,7,8-tetrahydrofolate. It catalyses the reaction IMP + H2O = 5-formamido-1-(5-phospho-D-ribosyl)imidazole-4-carboxamide. Its pathway is purine metabolism; IMP biosynthesis via de novo pathway; 5-formamido-1-(5-phospho-D-ribosyl)imidazole-4-carboxamide from 5-amino-1-(5-phospho-D-ribosyl)imidazole-4-carboxamide (10-formyl THF route): step 1/1. It participates in purine metabolism; IMP biosynthesis via de novo pathway; IMP from 5-formamido-1-(5-phospho-D-ribosyl)imidazole-4-carboxamide: step 1/1. The chain is Bifunctional purine biosynthesis protein PurH from Parasynechococcus marenigrum (strain WH8102).